A 156-amino-acid chain; its full sequence is Peptide deformylase (156 aa).

Cysteine 90 and histidine 132 together coordinate Fe cation. Glutamate 133 is an active-site residue. Residue histidine 136 participates in Fe cation binding.

This sequence belongs to the polypeptide deformylase family. Requires Fe(2+) as cofactor.

It carries out the reaction N-terminal N-formyl-L-methionyl-[peptide] + H2O = N-terminal L-methionyl-[peptide] + formate. Removes the formyl group from the N-terminal Met of newly synthesized proteins. Requires at least a dipeptide for an efficient rate of reaction. N-terminal L-methionine is a prerequisite for activity but the enzyme has broad specificity at other positions. The protein is Peptide deformylase of Natranaerobius thermophilus (strain ATCC BAA-1301 / DSM 18059 / JW/NM-WN-LF).